A 453-amino-acid polypeptide reads, in one-letter code: Homogentisate 1,2-dioxygenase (453 aa).

His-306 serves as the catalytic Proton acceptor. Residues His-349 and Glu-355 each coordinate Fe cation. Homogentisate-binding residues include Tyr-364 and His-385. His-385 serves as a coordination point for Fe cation.

The protein belongs to the homogentisate dioxygenase family. As to quaternary structure, hexamer; dimer of trimers. It depends on Fe cation as a cofactor.

It catalyses the reaction homogentisate + O2 = 4-maleylacetoacetate + H(+). The protein operates within amino-acid degradation; L-phenylalanine degradation; acetoacetate and fumarate from L-phenylalanine: step 4/6. Functionally, involved in the catabolism of homogentisate (2,5-dihydroxyphenylacetate or 2,5-OH-PhAc), a central intermediate in the degradation of phenylalanine and tyrosine. Catalyzes the oxidative ring cleavage of the aromatic ring of homogentisate to yield maleylacetoacetate. This is Homogentisate 1,2-dioxygenase from Rhizobium etli (strain ATCC 51251 / DSM 11541 / JCM 21823 / NBRC 15573 / CFN 42).